The primary structure comprises 464 residues: Heterogeneous nuclear ribonucleoprotein K (464 aa).

An N-acetylmethionine modification is found at Met1. A disordered region spans residues 1-37 (METEQPEETFPNTETNGEFGKRPAEDMEEEQAFKRSR). The segment at 1–276 (METEQPEETF…GRGGRPMPPS (276 aa)) is necessary for interaction with DDX1. A compositionally biased stretch (basic and acidic residues) spans 19–37 (FGKRPAEDMEEEQAFKRSR). N6-acetyllysine; alternate is present on Lys34. Residue Lys34 forms a Glycyl lysine isopeptide (Lys-Gly) (interchain with G-Cter in SUMO1); alternate linkage. Lys34 participates in a covalent cross-link: Glycyl lysine isopeptide (Lys-Gly) (interchain with G-Cter in SUMO2); alternate. At Ser36 the chain carries Phosphoserine. Thr39 is subject to Phosphothreonine. In terms of domain architecture, KH 1 spans 42 to 104 (MVELRILLQS…ETIGEILKKI (63 aa)). Glycyl lysine isopeptide (Lys-Gly) (interchain with G-Cter in SUMO2) cross-links involve residues Lys52 and Lys60. 2 repeat units span residues 54-76 (AGAV…NASV) and 59-62 (GKGG). A 2 X 22 AA approximate repeats region spans residues 54-421 (AGAVIGKGGK…QIRHESGASI (368 aa)). The segment at 59 to 407 (GKGGKNIKAL…LAGSIIGKGG (349 aa)) is 5 X 4 AA repeats of G-X-G-G. Phosphoserine occurs at positions 75 and 116. A KH 2 domain is found at 144–209 (DCELRLLIHQ…DRVVECIKII (66 aa)). Residue Lys163 forms a Glycyl lysine isopeptide (Lys-Gly) (interchain with G-Cter in SUMO1); alternate linkage. Residue Lys163 forms a Glycyl lysine isopeptide (Lys-Gly) (interchain with G-Cter in SUMO2); alternate linkage. The residue at position 198 (Lys198) is an N6-acetyllysine. The interval 209 to 337 (ILDLISESPI…RPGDRYDGMV (129 aa)) is interaction with ZIK1. 2 positions are modified to phosphoserine: Ser214 and Ser216. Lys219 participates in a covalent cross-link: Glycyl lysine isopeptide (Lys-Gly) (interchain with G-Cter in SUMO2); alternate. Lys219 is modified (N6-succinyllysine; alternate). Residues 236-273 (YGGFTMMFDDRRGRPVGFPMRGRGGFDRMPPGRGGRPM) form an RNA-binding RGG-box region. 3 tandem repeats follow at residues 245 to 250 (DRRGRP), 257 to 260 (GRGG), and 267 to 270 (GRGG). Residues 245–329 (DRRGRPVGFP…LMAYDRRGRP (85 aa)) are 2 X 6 AA approximate repeats. The tract at residues 250-329 (PVGFPMRGRG…LMAYDRRGRP (80 aa)) is disordered. Residues 252–266 (GFPMRGRGGFDRMPP) show a composition bias toward low complexity. Positions 276 to 285 (SRRDYDDMSP) are enriched in basic and acidic residues. Ser284 is subject to Phosphoserine. Residues 295–298 (GRGG) form a 3-4 repeat. At Arg316 the chain carries Omega-N-methylarginine. One copy of the 2-2 repeat lies at 324–329 (DRRGRP). Residue Arg377 is modified to Omega-N-methylarginine. Ser379 bears the Phosphoserine mark. Tyr380 carries the post-translational modification Phosphotyrosine. A KH 3 domain is found at 387-451 (IITTQVTIPK…DQIQNAQYLL (65 aa)). Tandem repeats lie at residues 399-421 (AGSI…GASI) and 404-407 (GKGG). Lys405 carries the N6-acetyllysine; alternate modification. A Glycyl lysine isopeptide (Lys-Gly) (interchain with G-Cter in SUMO2); alternate cross-link involves residue Lys405. A Phosphoserine modification is found at Ser420. Lys422 is covalently cross-linked (Glycyl lysine isopeptide (Lys-Gly) (interchain with G-Cter in SUMO1); alternate). Lys422 participates in a covalent cross-link: Glycyl lysine isopeptide (Lys-Gly) (interchain with G-Cter in SUMO2); alternate. Lys422 participates in a covalent cross-link: Glycyl lysine isopeptide (Lys-Gly) (interchain with G-Cter in SUMO); alternate.

In terms of assembly, identified in the spliceosome C complex. Interacts with ANKRD28, RBM42 and ZIK1. Interacts with DDX1. Interacts with MDM2; this interaction leads to ubiquitination and proteasomal degradation. Interacts with p53/TP53. Interacts with BRDT. Interacts with IVNS1ABP. Interacts with PPIA/CYPA. Part of a transcription inhibitory ribonucleoprotein complex composed at least of the circular RNA circZNF827, ZNF827 and HNRNPL. In terms of processing, sumoylated by CBX4. Sumoylation is increased upon DNA damage, such as that produced by doxorubicin, etoposide, UV light and camptothecin, due to enhanced CBX4 phosphorylation by HIPK2 under these conditions. Post-translationally, ubiquitinated by MDM2. Doxorubicin treatment does not affect monoubiquitination, but slightly decreases HNRNPK poly-ubiquitination. O-glycosylated (O-GlcNAcylated), in a cell cycle-dependent manner.

Its subcellular location is the cytoplasm. It localises to the nucleus. The protein resides in the nucleoplasm. It is found in the cell projection. The protein localises to the podosome. Functionally, one of the major pre-mRNA-binding proteins. Binds tenaciously to poly(C) sequences. Likely to play a role in the nuclear metabolism of hnRNAs, particularly for pre-mRNAs that contain cytidine-rich sequences. Can also bind poly(C) single-stranded DNA. Plays an important role in p53/TP53 response to DNA damage, acting at the level of both transcription activation and repression. When sumoylated, acts as a transcriptional coactivator of p53/TP53, playing a role in p21/CDKN1A and 14-3-3 sigma/SFN induction. As far as transcription repression is concerned, acts by interacting with long intergenic RNA p21 (lincRNA-p21), a non-coding RNA induced by p53/TP53. This interaction is necessary for the induction of apoptosis, but not cell cycle arrest. As part of a ribonucleoprotein complex composed at least of ZNF827, HNRNPL and the circular RNA circZNF827 that nucleates the complex on chromatin, may negatively regulate the transcription of genes involved in neuronal differentiation. The sequence is that of Heterogeneous nuclear ribonucleoprotein K (HNRNPK) from Bos taurus (Bovine).